The sequence spans 201 residues: Potassium-transporting ATPase KdpC subunit (201 aa).

The helical transmembrane segment at 13–33 (IIFMIFTILCGGIYTIFITGI) threads the bilayer.

It belongs to the KdpC family. As to quaternary structure, the system is composed of three essential subunits: KdpA, KdpB and KdpC.

Its subcellular location is the cell membrane. In terms of biological role, part of the high-affinity ATP-driven potassium transport (or Kdp) system, which catalyzes the hydrolysis of ATP coupled with the electrogenic transport of potassium into the cytoplasm. This subunit acts as a catalytic chaperone that increases the ATP-binding affinity of the ATP-hydrolyzing subunit KdpB by the formation of a transient KdpB/KdpC/ATP ternary complex. This chain is Potassium-transporting ATPase KdpC subunit, found in Clostridium botulinum (strain Eklund 17B / Type B).